We begin with the raw amino-acid sequence, 208 residues long: Outer-membrane lipoprotein carrier protein (208 aa).

The first 22 residues, 1-22, serve as a signal peptide directing secretion; sequence MRKTLSILAISLPLLVSGYAQA.

This sequence belongs to the LolA family. Monomer.

The protein resides in the periplasm. Its function is as follows. Participates in the translocation of lipoproteins from the inner membrane to the outer membrane. Only forms a complex with a lipoprotein if the residue after the N-terminal Cys is not an aspartate (The Asp acts as a targeting signal to indicate that the lipoprotein should stay in the inner membrane). This chain is Outer-membrane lipoprotein carrier protein, found in Shewanella sediminis (strain HAW-EB3).